Reading from the N-terminus, the 5537-residue chain is Histone-lysine N-methyltransferase 2D (5537 aa).

A disordered region spans residues 1-60 (MDSQKLAGEDKDSEPAADGPAASEDPSATESDLPNPHVGEVSVLSSGSPRLQETPQDCSG). Ser-27 is modified (phosphoserine). Over residues 43-57 (VLSSGSPRLQETPQD) the composition is skewed to polar residues. The C2HC pre-PHD-type 1; degenerate zinc-finger motif lies at 104–149 (GPNEAVLPSEDLSQIGFPEGLTPAHLGEPGGSCWAHHWCAAWSAGV). PHD-type zinc fingers lie at residues 170 to 218 (QRCS…PEHS), 226 to 276 (EARC…CKVC), and 273 to 323 (CKVC…CRVC). Residues 229 to 274 (CAVCEGPGELCDLFFCTSCGHHYHGACLDTALTARKRAGWQCPECK) form an RING-type 1; atypical zinc finger. The RING-type 2; degenerate zinc finger occupies 276–321 (CQACRKPGNDSKMLVCETCDKGYHTFCLKPPMEELPAHSWKCKACR). 4 disordered regions span residues 368-387 (VCSR…EPDA), 393-416 (QGQP…QCEA), 436-1331 (EEMP…RLKS), and 1340-1359 (VVAD…DDDT). Positions 439-668 (PLLPPPEESP…VSRLSPPPEE (230 aa)) are 15 X 5 AA repeats of S/P-P-P-E/P-E/A. Over residues 440–473 (LLPPPEESPLSPPPEESPTSPPPEASRLSPPPEE) the composition is skewed to pro residues. Repeat copies occupy residues 442 to 446 (PPPEE), 460 to 464 (PPPEA), and 469 to 473 (PPPEE). Low complexity predominate over residues 474–483 (LPASPLPEAL). A compositionally biased stretch (pro residues) spans 494–509 (LSPPPEESPLSPPPES). Tandem repeats lie at residues 496-500 (PPPEE) and 504-508 (SPPPE). Low complexity predominate over residues 510–519 (SPFSPLEESP). Pro residues-rich tracts occupy residues 520 to 547 (LSPP…PLSP) and 554 to 595 (LSPP…PPPE). 5 tandem repeats follow at residues 521–525 (SPPEE), 555–559 (SPPPE), 564–568 (SPPPE), 573–577 (SPPPE), and 582–586 (SPPPE). A compositionally biased stretch (low complexity) spans 596 to 607 (ASRLFPPFEESP). Positions 608-649 (LSPPPEESPLSPPPEASRLSPPPEDSPMSPPPEESPMSPPPE) are enriched in pro residues. 4 repeat units span residues 609–613 (SPPPE), 618–622 (SPPPE), 627–631 (SPPPE), and 645–649 (SPPPE). Residues 650-662 (VSRLSPLPVVSRL) show a composition bias toward low complexity. Copy 15 of the repeat occupies 663–667 (SPPPE). Positions 663–712 (SPPPEESPLSPPPEESPTSPPPEASRLSPPPEDSPTSPPPEDSPASPPPE) are enriched in pro residues. Positions 713–725 (DSLMSLPLEESPL) are enriched in low complexity. Phosphoserine is present on Ser-744. Basic and acidic residues-rich tracts occupy residues 745 to 760 (PRPE…EEPH) and 845 to 869 (RPEE…KPPE). Low complexity-rich tracts occupy residues 889 to 903 (PSLS…LSEP) and 911 to 928 (LPEE…LSPQ). Over residues 929 to 940 (LMPPDPLPPPLS) the composition is skewed to pro residues. The span at 941–954 (PIITAAAPPALSPL) shows a compositional bias: low complexity. A compositionally biased stretch (pro residues) spans 994-1008 (EPVPPMILPPSPGSP). A compositionally biased stretch (low complexity) spans 1048 to 1057 (PLSVPSPLSP). Positions 1068 to 1080 (AELHEMETEKVSE) are enriched in basic and acidic residues. Residue Ser-1151 is modified to Phosphoserine. Phosphothreonine is present on Thr-1195. A compositionally biased stretch (polar residues) spans 1207–1216 (EISNLSQGDA). Ser-1249 carries the post-translational modification Phosphoserine. Thr-1267 bears the Phosphothreonine mark. At Ser-1270 the chain carries Phosphoserine. 2 stretches are compositionally biased toward basic residues: residues 1289-1302 (GRRR…RIKQ) and 1310-1329 (GRRR…RARL). 3 consecutive PHD-type zinc fingers follow at residues 1377 to 1430 (QDMC…CIVC), 1427 to 1477 (CIVC…CVSC), and 1504 to 1559 (LVTC…CQPY). The RING-type 3; atypical zinc-finger motif lies at 1507 to 1557 (CPICHAPYVEEDLLIQCRHCERWMHAGCESLFTEDDVEQAADEGFDCVSCQ). Phosphoserine is present on Ser-1606. Disordered regions lie at residues 1610-1767 (KRRQ…LEDM), 1793-1889 (GVGR…MESK), 1904-2002 (EQHL…NQRS), and 2165-2683 (PQVP…QRQR). Positions 1637–1666 (PDDKKDGDLDTDELLKGEGGVEHMECEIKL) are enriched in basic and acidic residues. Ser-1671 bears the Phosphoserine mark. The segment covering 1675 to 1685 (EPGKEETEESK) has biased composition (basic and acidic residues). Composition is skewed to basic residues over residues 1702–1712 (RQRKSHTRTKK) and 1753–1762 (KQQRRGRKKS). 2 stretches are compositionally biased toward basic and acidic residues: residues 1806–1825 (AKGD…KGDD) and 1832–1841 (EESRGLEGKA). Phosphoserine is present on residues Ser-1820 and Ser-1834. Phosphothreonine is present on residues Thr-1843 and Thr-1865. Residues 1874–1889 (DLDRISTEELPKMESK) show a composition bias toward basic and acidic residues. The segment covering 1979-1990 (TTPSTPTTPTTE) has biased composition (low complexity). Residues 2190-2209 (PTAPPTYPPYPSPTGAPAQP) are compositionally biased toward pro residues. A Phosphoserine modification is found at Ser-2239. A Phosphothreonine modification is found at Thr-2240. An N6-acetyllysine modification is found at Lys-2246. Phosphoserine is present on residues Ser-2260 and Ser-2274. Over residues 2280-2292 (ESRKALEVKKEEL) the composition is skewed to basic and acidic residues. Phosphoserine is present on residues Ser-2309, Ser-2311, and Ser-2342. Pro residues-rich tracts occupy residues 2350 to 2365 (QEPP…PPSH) and 2379 to 2393 (AQPP…PPPE). Composition is skewed to low complexity over residues 2409-2431 (SRVP…RPLS) and 2494-2505 (FPAALPAGPAGE). Arg-2535 is modified (asymmetric dimethylarginine). Residues 2547–2560 (LKPPVPQPGLPPPH) show a composition bias toward pro residues. A compositionally biased stretch (polar residues) spans 2574–2584 (KPQSTNYTVAT). Residues 2589-2609 (PSGSPLGPSSGSTGESYGLSP) are compositionally biased toward low complexity. The segment covering 2610-2621 (LRPPSVLPPPAP) has biased composition (pro residues). At Ser-2640 the chain carries Phosphoserine. Positions 2669–2707 (MSGLSQTELEKQRQRQRLRELLIRQQIQRNTLRQEKETA) form a coiled coil. The LXXLL motif 1 motif lies at 2686–2690 (LRELL). Disordered regions lie at residues 2697–2814 (RNTL…QQQQ) and 2835–2996 (ARFP…LDDD). Residues 2707 to 2722 (AAAAAGAVGPPGSWGA) are compositionally biased toward low complexity. Composition is skewed to polar residues over residues 2733-2746 (SRGQ…QDKS) and 2781-2790 (PSSMDVNSRQ). Arg-2836 is subject to Asymmetric dimethylarginine. Pro residues predominate over residues 2931–2940 (PQKPSAPPAP). The LXXLL motif 2 motif lies at 3038-3042 (LDDLL). The segment at 3078–3110 (EKAEREALLRGVEPGPLGPEERPPPAADASEPR) is disordered. Position 3079 is an N6-acetyllysine (Lys-3079). Residue Ser-3130 is modified to Phosphoserine. 2 disordered regions span residues 3147-3209 (ANSL…GSSL) and 3263-3339 (KQQL…AHAL). At Thr-3197 the chain carries Phosphothreonine. Low complexity-rich tracts occupy residues 3198 to 3209 (PSPLSGPGGSSL), 3263 to 3289 (KQQL…LSAP), and 3301 to 3320 (GSSP…LAGA). Ser-3199 carries the phosphoserine modification. Residues 3249–3282 (IEDLLEHEKKELQKKQQLSAQLQPAQQQQQQQQQ) are a coiled coil. Over residues 3325-3334 (LPQPLMPTQP) the composition is skewed to pro residues. An N6-acetyllysine modification is found at Lys-3433. Disordered regions lie at residues 3462–3499 (LSGG…TFAQ) and 3596–3673 (RNKQ…GPFL). Residues 3562–3614 (EKLKLVTEQQSKIQKQLDQVRKQQKEHTNLMAEYRNKQQQQQQQQQQQQQQHS) are a coiled coil. Low complexity-rich tracts occupy residues 3599 to 3612 (QQQQ…QQQQ) and 3631 to 3643 (LPGQ…GLQP). Positions 3714–3750 (RLLQERQLQLQQQRMQLAQKLQQQQQQQQQQQHLLGQ) form a coiled coil. Arg-3727 is modified (asymmetric dimethylarginine). Residues 3758–3802 (QQGPGVQTNQALGPKPQGLMPPSSHQGLLVQQLSPQPPQGPQGML) form a disordered region. Residues 3897-3975 (LQQLQQQQQL…FQQQQQQQQM (79 aa)) are a coiled coil. The segment at 3984 to 4191 (LLSPQQQQQQ…GQGLPGVGIM (208 aa)) is disordered. Over residues 4012–4023 (PGALGPTLLLTG) the composition is skewed to low complexity. Residues 4024–4045 (KEQNTVDPAVSSEATEGPSTHQ) are compositionally biased toward polar residues. Positions 4073 to 4108 (SQLLLVQPQPQPQPSSLQLQPPLRLPGQQQQQVSLL) are enriched in low complexity. The segment covering 4111 to 4120 (AGGGSHGQLG) has biased composition (gly residues). The segment covering 4137–4154 (PSVSLGDQPGSMTQNLLG) has biased composition (polar residues). Residue Arg-4198 is modified to Asymmetric dimethylarginine. Phosphoserine is present on Ser-4215. The short motif at 4222 to 4226 (LQALL) is the LXXLL motif 3 element. 2 disordered regions span residues 4233 to 4398 (QSQA…VPGH) and 4410 to 4452 (ASQL…LLLA). A compositionally biased stretch (polar residues) spans 4237–4251 (VRQTPPYQEPGTQTS). Over residues 4252–4282 (PLQGLLGCQPQLGGFPGPQTGPLQELGAGPR) the composition is skewed to low complexity. Positions 4253-4257 (LQGLL) match the LXXLL motif 4 motif. The segment covering 4283-4293 (PQGPPRLPAPP) has biased composition (pro residues). 2 stretches are compositionally biased toward low complexity: residues 4294–4305 (GALSTGPVLGPV) and 4320–4331 (PSQLPSPSSQLP). Positions 4338–4357 (PTHPGTPKPQGPTLEPPPGR) are enriched in pro residues. A Phosphoserine modification is found at Ser-4359. The short motif at 4463 to 4467 (LQKLL) is the LXXLL motif 5 element. Lys-4465 carries the post-translational modification N6-acetyllysine. Disordered stretches follow at residues 4503 to 4544 (QGTP…KEDG) and 4613 to 4727 (KNNL…HLGS). The segment covering 4619–4633 (PPTPPSSLPPTPPPS) has biased composition (pro residues). A compositionally biased stretch (basic and acidic residues) spans 4648–4673 (LGEHPKDAASARDSERALRDTSEVKS). A Phosphoserine modification is found at Ser-4738. Lys-4756 is covalently cross-linked (Glycyl lysine isopeptide (Lys-Gly) (interchain with G-Cter in SUMO2)). Lys-4776 is subject to N6-acetyllysine. Ser-4822 and Ser-4849 each carry phosphoserine. A disordered region spans residues 4822–4857 (SPARAGTEPKKGEAEGPGGKEKGLEGKSPDTGPDWL). The span at 4828 to 4849 (TEPKKGEAEGPGGKEKGLEGKS) shows a compositional bias: basic and acidic residues. A Glycyl lysine isopeptide (Lys-Gly) (interchain with G-Cter in SUMO2) cross-link involves residue Lys-4880. Residues 4905–4980 (QLSAPPPEEP…GEDSRPPRLK (76 aa)) form a disordered region. A compositionally biased stretch (pro residues) spans 4908-4931 (APPPEEPSPPPSPLAPSPASPPTE). Over residues 4932–4941 (PLVELPTEPL) the composition is skewed to low complexity. Positions 4966–4976 (RPPEEGEDSRP) are enriched in basic and acidic residues. An LXXLL motif 6 motif is present at residues 4990 to 4994 (LRLLL). The C2HC pre-PHD-type 2 zinc-finger motif lies at 5029-5069 (MRRCCFCHEEGDGATDGPARLLNLDLDLWVHLNCALWSTEV). The PHD-type 7 zinc-finger motif lies at 5090–5137 (TKCSLCQRTGATSSCNRMRCPNVYHFACAIRAKCMFFKDKTMLCPMHK). The FYR N-terminal domain maps to 5175–5235 (LHMFRVGGLV…CCYRCSIGEN (61 aa)). The 86-residue stretch at 5236–5321 (NGRPEFVIKV…ESCQNYLFRY (86 aa)) folds into the FYR C-terminal domain. Positions 5337–5342 (GCARSE) match the WDR5 interaction motif (WIN) motif. The region spanning 5397–5513 (NNVYLARSRI…KGEELTYDYQ (117 aa)) is the SET domain. Residues Tyr-5451 and 5474–5475 (NH) contribute to the S-adenosyl-L-methionine site. The Zn(2+) site is built by Cys-5477, Cys-5525, Cys-5527, and Cys-5532. One can recognise a Post-SET domain in the interval 5521 to 5537 (HKIPCHCGAWNCRKWMN).

It belongs to the class V-like SAM-binding methyltransferase superfamily. Histone-lysine methyltransferase family. TRX/MLL subfamily. Component of the MLL2 complex (also named ASCOM complex), at least composed of catalytic subunit KMT2D/MLL2, ASH2L, RBBP5, WDR5, NCOA6, DPY30, KDM6A, PAXIP1/PTIP, PAGR1 and alpha- and beta-tubulin. Forms a core complex with the evolutionary conserved subcomplex WRAD composed of WDR5, RBBP5, ASH2L/ASH2 and DPY30 subunits; WRAD differentially stimulates the methyltransferase activity. Interacts with ESR1; interaction is direct. Interacts (via WIN motif) with WDR5. Expressed in most adult tissues, including a variety of hematoipoietic cells, with the exception of the liver.

It is found in the nucleus. The catalysed reaction is L-lysyl(4)-[histone H3] + S-adenosyl-L-methionine = N(6)-methyl-L-lysyl(4)-[histone H3] + S-adenosyl-L-homocysteine + H(+). Functionally, histone methyltransferase that catalyzes methyl group transfer from S-adenosyl-L-methionine to the epsilon-amino group of 'Lys-4' of histone H3 (H3K4). Part of chromatin remodeling machinery predominantly forms H3K4me1 methylation marks at active chromatin sites where transcription and DNA repair take place. Acts as a coactivator for estrogen receptor by being recruited by ESR1, thereby activating transcription. The protein is Histone-lysine N-methyltransferase 2D (KMT2D) of Homo sapiens (Human).